We begin with the raw amino-acid sequence, 926 residues long: Chitin synthase-like protein 2 (926 aa).

The interval 1-56 (MSFQNPSYINAKHRSFLQPKDTQDSQDLRNWVSHSSVDEETAYSSSTLSSSSSKSF) is disordered. Residues 44-55 (SSSTLSSSSSKS) show a composition bias toward low complexity. The next 7 membrane-spanning stretches (helical) occupy residues 564–584 (INSS…LWTT), 599–619 (LVFA…FLAF), 641–661 (LFLV…MLAM), 671–691 (LLFI…FCVF), 721–741 (LLIL…FFIF), 853–873 (VLVW…VFDG), and 885–905 (IFWS…TFIA).

The protein belongs to the chitin synthase family.

The protein resides in the membrane. Functionally, plays a role in septum formation. Has no chitin synthase activity. This Schizosaccharomyces pombe (strain 972 / ATCC 24843) (Fission yeast) protein is Chitin synthase-like protein 2 (chs2).